The chain runs to 496 residues: Probable E3 ubiquitin-protein ligase ARI12 (496 aa).

The segment at 110 to 319 (NEYFCGACGE…GDLHFCTFDA (210 aa)) is TRIAD supradomain. Zn(2+) contacts are provided by C114, C117, C131, H133, C136, C139, C162, C172, C240, C243, H248, C253, C267, C270, C286, and C289. The RING-type 1 zinc finger occupies 114–172 (CGACGESHPHKNLASVSCGHRICTRCWTSHINKIISEKPAAEWNLWLKCPVRVGLHASC). The IBR-type zinc-finger motif lies at 191–253 (FNYNQYLLRS…REDAHSPVDC (63 aa)). The RING-type 2; atypical zinc finger occupies 267 to 297 (CPKCKLRIPRNQDNSLKMKCLPCNYVFCWFC).

Belongs to the RBR family. Ariadne subfamily. Requires Zn(2+) as cofactor. Preferentially expressed in roots.

The enzyme catalyses [E2 ubiquitin-conjugating enzyme]-S-ubiquitinyl-L-cysteine + [acceptor protein]-L-lysine = [E2 ubiquitin-conjugating enzyme]-L-cysteine + [acceptor protein]-N(6)-ubiquitinyl-L-lysine.. The protein operates within protein modification; protein ubiquitination. In terms of biological role, might act as an E3 ubiquitin-protein ligase, or as part of E3 complex, which accepts ubiquitin from specific E2 ubiquitin-conjugating enzymes and then transfers it to substrates. This chain is Probable E3 ubiquitin-protein ligase ARI12 (ARI12), found in Arabidopsis thaliana (Mouse-ear cress).